Here is a 1929-residue protein sequence, read N- to C-terminus: Intraflagellar transport protein 140 (1929 aa).

WD repeat units follow at residues 76 to 116 (QVQV…PSYK) and 119 to 158 (LHQEELCLIKWLSHGRILVTCDVSGQVILYKFSTDTYSFE). Residues 774–795 (LSTPDTGSPAVEAEESPQRQTR) form a disordered region. LRR repeat units lie at residues 957–980 (STSLNLLFVGSSMLFALKTGTFTK), 1019–1044 (ISLLQSIYISSEQRAKVPLLVQSLAE), and 1510–1532 (AQSLELCIKSNRMKELSNLLADI).

The protein resides in the cell projection. Its subcellular location is the cilium. It is found in the flagellum. It localises to the cytoplasm. The protein localises to the cytoskeleton. The protein resides in the flagellum axoneme. Its subcellular location is the flagellum basal body. In terms of biological role, component of the intraflagellar transport complex A (IFT-A) involved in flagellar assembly. The chain is Intraflagellar transport protein 140 from Giardia intestinalis (strain ATCC 50803 / WB clone C6) (Giardia lamblia).